A 215-amino-acid polypeptide reads, in one-letter code: Polysialic acid O-acetyltransferase (215 aa).

Acetyl-CoA-binding positions include 119–121 (DMH), Arg148, Lys154, Ser166, 171–172 (YK), and Lys190.

This sequence belongs to the transferase hexapeptide repeat family. Homotrimer.

It catalyses the reaction [(2-&gt;6)-alpha-D-glucosyl-(1-&gt;4)-N-acetyl-alpha-D-neuraminosyl](n) + n acetyl-CoA = [(2-&gt;6)-alpha-D-glucosyl-(1-&gt;4)-N,7-O-diacetyl-alpha-D-neuraminosyl](n) + n CoA. It carries out the reaction [(2-&gt;6)-alpha-D-glucosyl-(1-&gt;4)-N-acetyl-alpha-D-neuraminosyl](n) + n acetyl-CoA = [(2-&gt;6)-alpha-D-glucosyl-(1-&gt;4)-N,O(9)-diacetyl-alpha-D-neuraminosyl](n) + n CoA. Functionally, catalyzes the O-acetylation of capsular polymeric sialic acid consisting of polymers of (2-&gt;6)-alpha-D-glucosyl-(1-&gt;4)-N-acetyl-alpha-D-neuraminosyl residues. Shows high substrate specificity toward polymers of sialic acid that contains a large number of residues. In Neisseria meningitidis, this protein is Polysialic acid O-acetyltransferase.